A 245-amino-acid polypeptide reads, in one-letter code: uncharacterized protein (245 aa).

Positions 1–27 (MKLKKRVSMFLVALTMCGGLFVTPAKA) are cleaved as a signal peptide.

This is an uncharacterized protein from Bacillus subtilis (strain 168).